Reading from the N-terminus, the 92-residue chain is Acylphosphatase (92 aa).

A disulfide bridge connects residues C5 and C49. The region spanning C5 to R92 is the Acylphosphatase-like domain. Catalysis depends on residues R20 and N38.

The protein belongs to the acylphosphatase family.

It carries out the reaction an acyl phosphate + H2O = a carboxylate + phosphate + H(+). The chain is Acylphosphatase from Escherichia coli O157:H7.